A 300-amino-acid chain; its full sequence is Cation-efflux pump FieF (300 aa).

The helical transmembrane segment at 24–44 (LLIKIFAWWYTGSVSILAALV) threads the bilayer. Residues Asp45 and Asp49 each contribute to the Zn(2+) site. 2 helical membrane-spanning segments follow: residues 82-102 (AALAQSMFISGSALFLFLTSI) and 114-134 (PGVGIGVTVIALICTIILVTF). Residues His153 and Asp157 each contribute to the Zn(2+) site. The next 2 membrane-spanning stretches (helical) occupy residues 156–176 (SDVMMNGAILIALGLSWYGWH) and 178–198 (ADALFALGIGIYILYSALRMG).

The protein belongs to the cation diffusion facilitator (CDF) transporter (TC 2.A.4) family. FieF subfamily. In terms of assembly, homodimer.

The protein localises to the cell inner membrane. The catalysed reaction is Zn(2+)(in) + H(+)(out) = Zn(2+)(out) + H(+)(in). The enzyme catalyses Cd(2+)(in) + H(+)(out) = Cd(2+)(out) + H(+)(in). It catalyses the reaction Fe(2+)(in) + H(+)(out) = Fe(2+)(out) + H(+)(in). Its function is as follows. Divalent metal cation transporter which exports Zn(2+), Cd(2+) and possibly Fe(2+). May be involved in zinc and iron detoxification by efflux. In Salmonella schwarzengrund (strain CVM19633), this protein is Cation-efflux pump FieF.